We begin with the raw amino-acid sequence, 136 residues long: MLSNPKRTRFRKQHRGRMKGISYRGNRICFGRYALQALEPTWITSRQIEAGRRAMTRYARRGGKIWVRIFPDKPVTVRPTETRMGSGKGSPEYWVSVVKPGRILYEMGGVSEIVAREAISIAASKMPIRTQFIIAG.

The protein belongs to the universal ribosomal protein uL16 family. As to quaternary structure, part of the 50S ribosomal subunit.

The protein localises to the plastid. It is found in the chloroplast. This Buxus microphylla (Littleleaf boxwood) protein is Large ribosomal subunit protein uL16c.